A 264-amino-acid chain; its full sequence is Thymidylate synthase (264 aa).

Residue R21 participates in dUMP binding. A (6R)-5,10-methylene-5,6,7,8-tetrahydrofolate-binding site is contributed by H51. Residue 126-127 (RR) coordinates dUMP. The active-site Nucleophile is the C146. Residues 166-169 (RSCD), N177, and 207-209 (HLY) each bind dUMP. D169 contacts (6R)-5,10-methylene-5,6,7,8-tetrahydrofolate. Residue A263 coordinates (6R)-5,10-methylene-5,6,7,8-tetrahydrofolate.

It belongs to the thymidylate synthase family. Bacterial-type ThyA subfamily. As to quaternary structure, homodimer.

Its subcellular location is the cytoplasm. It catalyses the reaction dUMP + (6R)-5,10-methylene-5,6,7,8-tetrahydrofolate = 7,8-dihydrofolate + dTMP. The protein operates within pyrimidine metabolism; dTTP biosynthesis. Functionally, catalyzes the reductive methylation of 2'-deoxyuridine-5'-monophosphate (dUMP) to 2'-deoxythymidine-5'-monophosphate (dTMP) while utilizing 5,10-methylenetetrahydrofolate (mTHF) as the methyl donor and reductant in the reaction, yielding dihydrofolate (DHF) as a by-product. This enzymatic reaction provides an intracellular de novo source of dTMP, an essential precursor for DNA biosynthesis. This chain is Thymidylate synthase, found in Shewanella putrefaciens (strain CN-32 / ATCC BAA-453).